The sequence spans 260 residues: RNA replication protein (260 aa).

A RdRp catalytic domain is found at 40-147 (GICTESDYEA…SERLCIKKEH (108 aa)).

It belongs to the potexviruses/carlaviruses RNA replication protein family.

The enzyme catalyses RNA(n) + a ribonucleoside 5'-triphosphate = RNA(n+1) + diphosphate. It carries out the reaction ATP + H2O = ADP + phosphate + H(+). Its function is as follows. RNA replication. The central part of this protein possibly functions as an ATP-binding helicase. The sequence is that of RNA replication protein from Chrysanthemum morifolium (Florist's daisy).